The primary structure comprises 337 residues: Ribosomal RNA small subunit methyltransferase H (337 aa).

S-adenosyl-L-methionine-binding positions include 36 to 38 (GGH), Asp56, Phe82, Asp100, and Gln107. Positions 315-337 (LEERSKRIPNPQSPIPASQGDAQ) are disordered.

Belongs to the methyltransferase superfamily. RsmH family.

It localises to the cytoplasm. It catalyses the reaction cytidine(1402) in 16S rRNA + S-adenosyl-L-methionine = N(4)-methylcytidine(1402) in 16S rRNA + S-adenosyl-L-homocysteine + H(+). Specifically methylates the N4 position of cytidine in position 1402 (C1402) of 16S rRNA. This Xanthomonas euvesicatoria pv. vesicatoria (strain 85-10) (Xanthomonas campestris pv. vesicatoria) protein is Ribosomal RNA small subunit methyltransferase H.